We begin with the raw amino-acid sequence, 209 residues long: RNA chaperone ProQ (209 aa).

The interval 105–148 (ESQDKAKAKRAALAPKPAAKKAPKKVAVPQRAKTERPAKPAPKA) is disordered.

Belongs to the ProQ family.

It is found in the cytoplasm. Its function is as follows. RNA chaperone with significant RNA binding, RNA strand exchange and RNA duplexing activities. The sequence is that of RNA chaperone ProQ from Shewanella baltica (strain OS223).